A 162-amino-acid polypeptide reads, in one-letter code: MAQLPLSPAPQRPETKTPGKPEAELIPKPLLRAMIGIALLSLALTTYAVLTGRPHEGVPAPGKVVAEKLVVLKDIDARHATVSDPEGNILLDLPEGGFVDVMAAAVRRSRAVARITDNPPVRIVRYDNGRLAMEDPATGWSTELYAFGADSKAAFERILDMK.

The segment at methionine 1–alanine 23 is disordered. A compositionally biased stretch (basic and acidic residues) spans proline 13 to alanine 23.

This is an uncharacterized protein from Rhodobacter capsulatus (Rhodopseudomonas capsulata).